The sequence spans 475 residues: Equilibrative nucleoside transporter 3 (475 aa).

The Cytoplasmic segment spans residues Met-1–Asn-51. Ser-21 carries the post-translational modification Phosphoserine. The Dileucine internalization motif signature appears at Leu-31–Leu-32. A helical transmembrane segment spans residues Gly-52–Val-72. Topologically, residues Thr-73–Ser-105 are extracellular. The N-linked (GlcNAc...) asparagine glycan is linked to Asn-84. Residues Tyr-106–Val-126 traverse the membrane as a helical segment. Residues Asn-127 to Arg-134 are Cytoplasmic-facing. The helical transmembrane segment at Val-135 to Val-155 threads the bilayer. The Extracellular segment spans residues Asp-156–Arg-162. Residues Gly-163 to Asn-183 traverse the membrane as a helical segment. At Ser-184–Gln-199 the chain is on the cytoplasmic side. Residues Ala-200–Leu-220 traverse the membrane as a helical segment. At Ala-221–Thr-230 the chain is on the extracellular side. A helical transmembrane segment spans residues Leu-231–Leu-251. Topologically, residues Ser-252–Thr-305 are cytoplasmic. A helical transmembrane segment spans residues Ala-306 to Ile-326. Topologically, residues Ser-327–Pro-340 are extracellular. The helical transmembrane segment at Trp-341–Cys-361 threads the bilayer. The Cytoplasmic portion of the chain corresponds to Gly-362–Lys-377. Residues Leu-378–Tyr-398 form a helical membrane-spanning segment. The Extracellular segment spans residues Gln-399–Pro-415. Residues Val-416–Tyr-436 form a helical membrane-spanning segment. At Gly-437–Ser-450 the chain is on the cytoplasmic side. A helical membrane pass occupies residues Val-451 to Leu-471. The Extracellular segment spans residues Glu-472–Ile-475.

It belongs to the SLC29A/ENT transporter (TC 2.A.57) family. Expressed in macrophages.

It localises to the lysosome membrane. Its subcellular location is the late endosome membrane. The protein resides in the mitochondrion membrane. The protein localises to the cell membrane. It catalyses the reaction adenosine(in) = adenosine(out). The catalysed reaction is guanosine(in) = guanosine(out). The enzyme catalyses inosine(in) = inosine(out). It carries out the reaction uridine(out) = uridine(in). It catalyses the reaction cytidine(in) = cytidine(out). The catalysed reaction is thymidine(in) = thymidine(out). The enzyme catalyses 2'-deoxyadenosine(in) = 2'-deoxyadenosine(out). It carries out the reaction 2'-deoxycytidine(in) = 2'-deoxycytidine(out). It catalyses the reaction guanine(out) = guanine(in). The catalysed reaction is uracil(in) = uracil(out). The enzyme catalyses (R)-noradrenaline(out) = (R)-noradrenaline(in). It carries out the reaction dopamine(out) = dopamine(in). It catalyses the reaction serotonin(out) = serotonin(in). The catalysed reaction is tyramine(in) = tyramine(out). The enzyme catalyses ATP(in) = ATP(out). Functionally, uniporter that mediates the facilitative transport of nucleoside across lysosomal and mitochondrial membranes. Functions as a non-electrogenic Na(+)-independent transporter. Substrate transport is pH-dependent and enhanced under acidic condition, probably reflecting the location of the transporter in acidic intracellular compartments. Proton is not a cotransporting ion but most likely change the ionization state of the transporter which dictates transport-permissible/impermissible conformation for nucleoside translocation. May direct the nucleoside transport from lysosomes to cytosol or cytosol to mitochondria to facilitate the fundamental function of salvage synthesis of nucleic acids. Involved in the transport of nucleosides (adenosine, guanosine, uridine, thymidine, cytidine and inosine) and deoxynucleosides (deoxyadenosine, deoxycytidine). Also mediates transport of purine nucleobases (adenine, guanine), and pyrimidine nucleobases (uracil). Also able to transport monoamine neurotransmitters dopamine, serotonin, noradrenaline and tyramine. Capable of transporting ATP. Mediates nucleoside export from lysosomes in macrophages, which regulates macrophage functions and numbers. The polypeptide is Equilibrative nucleoside transporter 3 (Mus musculus (Mouse)).